Reading from the N-terminus, the 315-residue chain is MYFIFSTASLSSVTLIVMTNTDHPNQPNPPHLHTPVLCQEVIDGLAIEPNGHYLDATLGRGGHSRLILEAFPDVRVTGIDLDEEAIAITQENFSLMGDKRLQVWQGNFADYPGEIGEFNGIIADLGVSSPQFDVPERGFSFRHQAPLDMRMNREQSLTAGEIINHWDQTSLADLFYQYGEERRSRAIARRLVQQRPFETTTELAEAIAKCFPPKQRYGRIHPATRVFQALRIAVNDELGSLERFLEKAPHWLKPGGRIGIISFHSLEDRRVKYSFRDSLLLDVITKKPIIPQPEEEEKNPRSRSAKLRFAQRKPL.

S-adenosyl-L-methionine is bound by residues 61–63, aspartate 80, phenylalanine 108, aspartate 124, and glutamine 131; that span reads GGH. The segment at 291–315 is disordered; sequence PQPEEEEKNPRSRSAKLRFAQRKPL. Basic residues predominate over residues 301 to 315; the sequence is RSRSAKLRFAQRKPL.

The protein belongs to the methyltransferase superfamily. RsmH family.

It localises to the cytoplasm. The catalysed reaction is cytidine(1402) in 16S rRNA + S-adenosyl-L-methionine = N(4)-methylcytidine(1402) in 16S rRNA + S-adenosyl-L-homocysteine + H(+). Functionally, specifically methylates the N4 position of cytidine in position 1402 (C1402) of 16S rRNA. This is Ribosomal RNA small subunit methyltransferase H from Crocosphaera subtropica (strain ATCC 51142 / BH68) (Cyanothece sp. (strain ATCC 51142)).